Consider the following 182-residue polypeptide: tRNA-splicing endonuclease (182 aa).

Residues Y119, H127, and K158 contribute to the active site.

It belongs to the tRNA-intron endonuclease family. Archaeal short subfamily. In terms of assembly, homotetramer; although the tetramer contains four active sites, only two participate in the cleavage. Therefore, it should be considered as a dimer of dimers.

It carries out the reaction pretRNA = a 3'-half-tRNA molecule with a 5'-OH end + a 5'-half-tRNA molecule with a 2',3'-cyclic phosphate end + an intron with a 2',3'-cyclic phosphate and a 5'-hydroxyl terminus.. In terms of biological role, endonuclease that removes tRNA introns. Cleaves pre-tRNA at the 5'- and 3'-splice sites to release the intron. The products are an intron and two tRNA half-molecules bearing 2',3' cyclic phosphate and 5'-OH termini. Recognizes a pseudosymmetric substrate in which 2 bulged loops of 3 bases are separated by a stem of 4 bp. The sequence is that of tRNA-splicing endonuclease from Saccharolobus solfataricus (strain ATCC 35092 / DSM 1617 / JCM 11322 / P2) (Sulfolobus solfataricus).